The following is a 154-amino-acid chain: Ribonuclease H (154 aa).

One can recognise an RNase H type-1 domain in the interval 1–142 (MLKQITLYTD…CDELARNAAL (142 aa)). Asp10, Glu48, Asp70, and Asp134 together coordinate Mg(2+).

It belongs to the RNase H family. As to quaternary structure, monomer. Mg(2+) is required as a cofactor.

The protein resides in the cytoplasm. It carries out the reaction Endonucleolytic cleavage to 5'-phosphomonoester.. Functionally, endonuclease that specifically degrades the RNA of RNA-DNA hybrids. This is Ribonuclease H from Tolumonas auensis (strain DSM 9187 / NBRC 110442 / TA 4).